The sequence spans 335 residues: Succinylglutamate desuccinylase (335 aa).

3 residues coordinate Zn(2+): H59, E62, and H151. E215 is an active-site residue.

This sequence belongs to the AspA/AstE family. Succinylglutamate desuccinylase subfamily. Zn(2+) is required as a cofactor.

It carries out the reaction N-succinyl-L-glutamate + H2O = L-glutamate + succinate. It participates in amino-acid degradation; L-arginine degradation via AST pathway; L-glutamate and succinate from L-arginine: step 5/5. Its function is as follows. Transforms N(2)-succinylglutamate into succinate and glutamate. The chain is Succinylglutamate desuccinylase from Pseudomonas putida (strain GB-1).